The primary structure comprises 90 residues: DNA-binding protein HU-beta (90 aa).

This sequence belongs to the bacterial histone-like protein family. In terms of assembly, heterodimer of an alpha and a beta chain.

Functionally, histone-like DNA-binding protein which is capable of wrapping DNA to stabilize it, and thus to prevent its denaturation under extreme environmental conditions. In Salmonella typhi, this protein is DNA-binding protein HU-beta (hupB).